The chain runs to 363 residues: MNITNCTTEASMAIRPKTITEKMLICMTLVVITTLTTLLNLAVIMAIGTTKKLHQPANYLICSLAVTDLLVAVLVMPLSIIYIVMDRWKLGYFLCEVWLSVDMTCCTCSILHLCVIALDRYWAITNAIEYARKRTAKRAALMILTVWTISIFISMPPLFWRSHRRLSPPPSQCTIQHDHVIYTIYSTLGAFYIPLTLILILYYRIYHAAKSLYQKRGSSRHLSNRSTDSQNSFASCKLTQTFCVSDFSTSDPTTEFEKFHASIRIPPFDNDLDHPGERQQISSTRERKAARILGLILGAFILSWLPFFIKELIVGLSIYTVSSEVADFLTWLGYVNSLINPLLYTSFNEDFKLAFKKLIRCRE.

Residues 1-21 lie on the Extracellular side of the membrane; that stretch reads MNITNCTTEASMAIRPKTITE. N2 and N5 each carry an N-linked (GlcNAc...) asparagine glycan. A helical transmembrane segment spans residues 22 to 45; that stretch reads KMLICMTLVVITTLTTLLNLAVIM. The Cytoplasmic segment spans residues 46-59; sequence AIGTTKKLHQPANY. A helical membrane pass occupies residues 60 to 84; the sequence is LICSLAVTDLLVAVLVMPLSIIYIV. Topologically, residues 85-92 are extracellular; the sequence is MDRWKLGY. The helical transmembrane segment at 93-118 threads the bilayer; that stretch reads FLCEVWLSVDMTCCTCSILHLCVIAL. A disulfide bridge connects residues C95 and C173. Serotonin is bound by residues D102 and C106. The DRY motif; important for ligand-induced conformation changes signature appears at 119-121; that stretch reads DRY. Residues 119-138 lie on the Cytoplasmic side of the membrane; that stretch reads DRYWAITNAIEYARKRTAKR. The helical transmembrane segment at 139–157 threads the bilayer; sequence AALMILTVWTISIFISMPP. Topologically, residues 158 to 179 are extracellular; sequence LFWRSHRRLSPPPSQCTIQHDH. Residues 180–203 traverse the membrane as a helical segment; the sequence is VIYTIYSTLGAFYIPLTLILILYY. At 204–291 the chain is on the cytoplasmic side; sequence RIYHAAKSLY…SSTRERKAAR (88 aa). Residues 292–316 traverse the membrane as a helical segment; that stretch reads ILGLILGAFILSWLPFFIKELIVGL. The Extracellular portion of the chain corresponds to 317–322; sequence SIYTVS. A helical transmembrane segment spans residues 323 to 345; that stretch reads SEVADFLTWLGYVNSLINPLLYT. The NPxxY motif; important for ligand-induced conformation changes and signaling motif lies at 340 to 344; it reads NPLLY. Residues 346–363 are Cytoplasmic-facing; it reads SFNEDFKLAFKKLIRCRE.

It belongs to the G-protein coupled receptor 1 family.

Its subcellular location is the cell membrane. G-protein coupled receptor for 5-hydroxytryptamine (serotonin). Also functions as a receptor for various alkaloids and psychoactive substances. Ligand binding causes a conformation change that triggers signaling via guanine nucleotide-binding proteins (G proteins) and modulates the activity of downstream effectors, such as adenylate cyclase. HTR1E is coupled to G(i)/G(o) G alpha proteins and mediates inhibitory neurotransmission by inhibiting adenylate cyclase activity. The protein is 5-hydroxytryptamine receptor 1E (HTR1E) of Pan troglodytes (Chimpanzee).